Here is a 328-residue protein sequence, read N- to C-terminus: Delta-aminolevulinic acid dehydratase (328 aa).

The Schiff-base intermediate with substrate role is filled by Lys200. Arg210 and Lys222 together coordinate 5-aminolevulinate. Glu238 contributes to the Mg(2+) binding site. The active-site Schiff-base intermediate with substrate is Lys253. 5-aminolevulinate-binding residues include Ser279 and Tyr318.

It belongs to the ALAD family. Homooctamer.

The catalysed reaction is 2 5-aminolevulinate = porphobilinogen + 2 H2O + H(+). The protein operates within porphyrin-containing compound metabolism; protoporphyrin-IX biosynthesis; coproporphyrinogen-III from 5-aminolevulinate: step 1/4. Stimulated by magnesium, inhibited by zinc. Catalyzes an early step in the biosynthesis of tetrapyrroles. Binds two molecules of 5-aminolevulinate per subunit, each at a distinct site, and catalyzes their condensation to form porphobilinogen. The chain is Delta-aminolevulinic acid dehydratase (hemB) from Chlorobaculum tepidum (strain ATCC 49652 / DSM 12025 / NBRC 103806 / TLS) (Chlorobium tepidum).